A 534-amino-acid polypeptide reads, in one-letter code: Signal recognition particle subunit SRP54 (534 aa).

The interval 1–296 (MVLQDLGRRI…EPKAFIQKLL (296 aa)) is G-domain. Residues 109–116 (GLQGAGKT), 191–195 (DTSGR), and 249–252 (TKTD) contribute to the GTP site. An M-domain region spans residues 297 to 534 (GMGDMAGLVE…GGGGGRGRGR (238 aa)).

It belongs to the GTP-binding SRP family. SRP54 subfamily. Fungal signal recognition particle consists of a 7S RNA molecule (scR1) and at least six protein subunits: srp72, srp68, srpA/srp54, sec65, srp21 and srp14.

It localises to the cytoplasm. Its subcellular location is the endoplasmic reticulum. The catalysed reaction is GTP + H2O = GDP + phosphate + H(+). In terms of biological role, signal-recognition-particle (SRP) assembly has a crucial role in targeting secretory proteins to the rough endoplasmic reticulum (ER) membrane. SRP is required for the cotranslational protein translocation for ER import and preferentially recognizes strongly hydrophobic signal sequences. It is involved in targeting the nascent chain-ribosome (RNC) complex to the ER and is proposed to participate in the arrest of nascent chain elongation during membrane targeting. srpA/srp54 binds to the signal sequence of presecretory protein when they emerge from the ribosomes. srpA/srp54 interacts with the scR1 RNA and mediates the association of the resulting SRP-RNC complex with the signal recognition particle receptor (SR) via its alpha subunit srp101. Both, srpA/srp54 and srp101, are locked in their GTP bound forms in the SRP-RNC-SR complex, which dissociates upon transferring the signal sequence to the protein-conducting channel (translocon). After signal sequence transfer, srpA/srp54 and srp101 act as reciprocal GTPase-activating proteins (GAPs), thereby resolving their association. In Aspergillus niger, this protein is Signal recognition particle subunit SRP54 (srpA).